Reading from the N-terminus, the 146-residue chain is Hemoglobin subunit beta (146 aa).

Val1 carries the N-acetylvaline modification. In terms of domain architecture, Globin spans 2–146; it reads HLTADEKAAV…VATALAHKYH (145 aa). Position 12 is a phosphothreonine (Thr12). Residue Ser44 is modified to Phosphoserine. At Lys59 the chain carries N6-acetyllysine. Residue His63 participates in heme b binding. An N6-acetyllysine modification is found at Lys82. His92 serves as a coordination point for heme b. At Cys93 the chain carries S-nitrosocysteine. At Lys144 the chain carries N6-acetyllysine.

It belongs to the globin family. As to quaternary structure, heterotetramer of two alpha chains and two beta chains. As to expression, red blood cells.

Functionally, involved in oxygen transport from the lung to the various peripheral tissues. In Cephalopachus bancanus (Western tarsier), this protein is Hemoglobin subunit beta (HBB).